Here is a 398-residue protein sequence, read N- to C-terminus: Ubiquitin-like modifier-activating enzyme 5 (398 aa).

ATP contacts are provided by Gly76, Asp97, Lys120, Asn143, and Asn177. Cys219 and Cys222 together coordinate Zn(2+). Cys243 acts as the Glycyl thioester intermediate in catalysis. Residues Cys296 and Cys301 each coordinate Zn(2+).

This sequence belongs to the ubiquitin-activating E1 family. UBA5 subfamily.

In terms of biological role, E1-like enzyme which activates UFM1. This Drosophila grimshawi (Hawaiian fruit fly) protein is Ubiquitin-like modifier-activating enzyme 5.